The chain runs to 297 residues: uncharacterized protein (297 aa).

The active site involves Glu-46.

The protein belongs to the PhzF family. As to quaternary structure, homodimer and homotetramer.

This is an uncharacterized protein from Salmonella typhimurium (strain LT2 / SGSC1412 / ATCC 700720).